We begin with the raw amino-acid sequence, 356 residues long: Kinetochore-associated protein DSN1 homolog (356 aa).

A disordered region spans residues 1-28 (MTSVTRSEIIDEKGPVMSKTHDHQLESS). Basic and acidic residues predominate over residues 8 to 25 (EIIDEKGPVMSKTHDHQL). Residues serine 28, serine 30, serine 58, serine 77, serine 81, serine 109, and serine 125 each carry the phosphoserine modification. A disordered region spans residues 73–93 (LQSKSLHLSPQEQSASYQDRR). A compositionally biased stretch (polar residues) spans 75 to 89 (SKSLHLSPQEQSASY). Lysine 253 participates in a covalent cross-link: Glycyl lysine isopeptide (Lys-Gly) (interchain with G-Cter in SUMO2). The residue at position 331 (serine 331) is a Phosphoserine.

Component of the MIS12 complex composed of MIS12, DSN1, NSL1 and PMF1. Also interacts with KNL1, CBX3 and CBX5. Interacts with KNSTRN.

The protein localises to the nucleus. The protein resides in the chromosome. Its subcellular location is the centromere. It localises to the kinetochore. In terms of biological role, part of the MIS12 complex which is required for normal chromosome alignment and segregation and kinetochore formation during mitosis. The sequence is that of Kinetochore-associated protein DSN1 homolog (DSN1) from Homo sapiens (Human).